Reading from the N-terminus, the 88-residue chain is DNA-directed RNA polymerase subunit omega (88 aa).

The protein belongs to the RNA polymerase subunit omega family. The RNAP catalytic core consists of 2 alpha, 1 beta, 1 beta' and 1 omega subunit. When a sigma factor is associated with the core the holoenzyme is formed, which can initiate transcription.

It catalyses the reaction RNA(n) + a ribonucleoside 5'-triphosphate = RNA(n+1) + diphosphate. Promotes RNA polymerase assembly. Latches the N- and C-terminal regions of the beta' subunit thereby facilitating its interaction with the beta and alpha subunits. In Thermobifida fusca (strain YX), this protein is DNA-directed RNA polymerase subunit omega.